The following is a 301-amino-acid chain: Probable enoyl-CoA hydratase 2, mitochondrial (301 aa).

The N-terminal 32 residues, 1-32, are a transit peptide targeting the mitochondrion; it reads MSFVKYLRRDNLLQLAGKPSLSRNYILQTCRT. Residues 105 to 109 and G152 each bind substrate; that span reads AGADL.

It belongs to the enoyl-CoA hydratase/isomerase family.

The protein localises to the mitochondrion. It catalyses the reaction a (3S)-3-hydroxyacyl-CoA = a (2E)-enoyl-CoA + H2O. The enzyme catalyses a 4-saturated-(3S)-3-hydroxyacyl-CoA = a (3E)-enoyl-CoA + H2O. It participates in lipid metabolism; fatty acid beta-oxidation. Its function is as follows. Straight-chain enoyl-CoA thioesters from C4 up to at least C16 are processed, although with decreasing catalytic rate. In Arabidopsis thaliana (Mouse-ear cress), this protein is Probable enoyl-CoA hydratase 2, mitochondrial.